Reading from the N-terminus, the 152-residue chain is Transcriptional regulator MraZ (152 aa).

2 SpoVT-AbrB domains span residues 5-52 and 81-124; these read ASAI…PADE and AHEI…DEAQ.

The protein belongs to the MraZ family. Forms oligomers.

It localises to the cytoplasm. Its subcellular location is the nucleoid. This chain is Transcriptional regulator MraZ, found in Shewanella amazonensis (strain ATCC BAA-1098 / SB2B).